The sequence spans 305 residues: Glyceraldehyde-3-phosphate dehydrogenase 2, cytosolic (305 aa).

Residues D3 and R50 each contribute to the NAD(+) site. Residues 121–123 (SCT), T152, 181–182 (TG), and R204 each bind D-glyceraldehyde 3-phosphate. C122 acts as the Nucleophile in catalysis. N286 serves as a coordination point for NAD(+).

It belongs to the glyceraldehyde-3-phosphate dehydrogenase family. Homotetramer.

Its subcellular location is the cytoplasm. It catalyses the reaction D-glyceraldehyde 3-phosphate + phosphate + NAD(+) = (2R)-3-phospho-glyceroyl phosphate + NADH + H(+). Its pathway is carbohydrate degradation; glycolysis; pyruvate from D-glyceraldehyde 3-phosphate: step 1/5. Functionally, key enzyme in glycolysis that catalyzes the first step of the pathway by converting D-glyceraldehyde 3-phosphate (G3P) into 3-phospho-D-glyceroyl phosphate. Essential for the maintenance of cellular ATP levels and carbohydrate metabolism. The protein is Glyceraldehyde-3-phosphate dehydrogenase 2, cytosolic (GAPC) of Hordeum vulgare (Barley).